Here is a 487-residue protein sequence, read N- to C-terminus: GTPase Der (487 aa).

EngA-type G domains are found at residues Pro-3–Ala-166 and Ile-193–Val-366. GTP is bound by residues Gly-9–Ser-16, Asp-56–Ile-60, Asn-118–Asp-121, Gly-199–Ser-206, Asp-246–Val-250, and Asn-311–Asp-314. Positions Thr-367–Glu-451 constitute a KH-like domain. A compositionally biased stretch (basic and acidic residues) spans Gly-449 to Leu-461. The tract at residues Gly-449–Arg-487 is disordered. Over residues Asn-467–Arg-487 the composition is skewed to basic residues.

The protein belongs to the TRAFAC class TrmE-Era-EngA-EngB-Septin-like GTPase superfamily. EngA (Der) GTPase family. Associates with the 50S ribosomal subunit.

Its function is as follows. GTPase that plays an essential role in the late steps of ribosome biogenesis. In Pseudomonas putida (strain GB-1), this protein is GTPase Der.